Reading from the N-terminus, the 373-residue chain is Peptidoglycan recognition protein 4 (373 aa).

The first 17 residues, 1-17, serve as a signal peptide directing secretion; it reads MLPWLLVFSALGIQAWG. 5 N-linked (GlcNAc...) asparagine glycosylation sites follow: N22, N39, N109, N145, and N247. 2 N-acetylmuramoyl-L-alanine amidase domains span residues 74–212 and 235–358; these read TPVN…ACPG and YGII…LSPG. Disulfide bonds link C210–C332, C226–C270, and C246–C252. Peptidoglycan is bound by residues Y263 and Y274. Interaction with murein regions lie at residues 293 to 302 and 353 to 354; these read QGSSTPGYDD and RT.

The protein belongs to the N-acetylmuramoyl-L-alanine amidase 2 family. Homodimer; disulfide-linked. Heterodimer with PGLYRP3; disulfide-linked. Post-translationally, N-glycosylated. In terms of tissue distribution, detected in skin epidermis, eccrine sweat glands and ducts, mucous cells in the submandibular salivary gland, mucous cells in the throat, ciliary body epithelial cells of the eye, small intestine, colon, stomach and in mature epithelial cells of the tongue (at protein level). High expression in skin and esophagus. Expressed also to a much lesser extent in the tonsils and thymus.

It localises to the secreted. In terms of biological role, pattern receptor that binds to murein peptidoglycans (PGN) of Gram-positive bacteria. Has bactericidal activity towards Gram-positive bacteria. May kill Gram-positive bacteria by interfering with peptidoglycan biosynthesis. Also binds to Gram-negative bacteria, and has bacteriostatic activity towards Gram-negative bacteria. Plays a role in innate immunity. The sequence is that of Peptidoglycan recognition protein 4 (PGLYRP4) from Homo sapiens (Human).